We begin with the raw amino-acid sequence, 377 residues long: Sterol 24-C-methyltransferase erg6 (377 aa).

This sequence belongs to the class I-like SAM-binding methyltransferase superfamily. Erg6/SMT family.

It is found in the microsome. The protein resides in the mitochondrion. The catalysed reaction is lanosterol + S-adenosyl-L-methionine = eburicol + S-adenosyl-L-homocysteine + H(+). It functions in the pathway steroid metabolism; ergosterol biosynthesis. With respect to regulation, specific and total activity is decreased in presence of alpha-bisabolol. Functionally, sterol 24-C-methyltransferase; part of the third module of ergosterol biosynthesis pathway that includes the late steps of the pathway. Methylates lanosterol at C-24 to produce eburicol. The third module or late pathway involves the ergosterol synthesis itself through consecutive reactions that mainly occur in the endoplasmic reticulum (ER) membrane. Firstly, the squalene synthase erg9 catalyzes the condensation of 2 farnesyl pyrophosphate moieties to form squalene, which is the precursor of all steroids. Squalene synthase is crucial for balancing the incorporation of farnesyl diphosphate (FPP) into sterol and nonsterol isoprene synthesis. Secondly, squalene is converted into lanosterol by the consecutive action of the squalene epoxidase erg1 and the lanosterol synthase erg7. Then, the delta(24)-sterol C-methyltransferase erg6 methylates lanosterol at C-24 to produce eburicol. Eburicol is the substrate of the sterol 14-alpha demethylase encoded by cyp51A and cyp51B, to yield 4,4,24-trimethyl ergosta-8,14,24(28)-trienol. The C-14 reductase erg24 then reduces the C14=C15 double bond which leads to 4,4-dimethylfecosterol. A sequence of further demethylations at C-4, involving the C-4 demethylation complex containing the C-4 methylsterol oxidases erg25A or erg25B, the sterol-4-alpha-carboxylate 3-dehydrogenase erg26 and the 3-keto-steroid reductase erg27, leads to the production of fecosterol via 4-methylfecosterol. The C-8 sterol isomerase erg2 then catalyzes the reaction which results in unsaturation at C-7 in the B ring of sterols and thus converts fecosterol to episterol. The sterol-C5-desaturase erg3B then catalyzes the introduction of a C-5 double bond in the B ring to produce 5-dehydroepisterol. The 2 other sterol-C5-desaturases, erg3A and erg3C, seem to be less important in ergosterol biosynthesis. The C-22 sterol desaturase erg5 further converts 5-dehydroepisterol into ergosta-5,7,22,24(28)-tetraen-3beta-ol by forming the C-22(23) double bond in the sterol side chain. Finally, ergosta-5,7,22,24(28)-tetraen-3beta-ol is substrate of the C-24(28) sterol reductases erg4A and erg4B to produce ergosterol. Possible alternative sterol biosynthetic pathways might exist from fecosterol to ergosterol, depending on the activities of the erg3 isoforms. This is Sterol 24-C-methyltransferase erg6 from Aspergillus fumigatus (strain ATCC MYA-4609 / CBS 101355 / FGSC A1100 / Af293) (Neosartorya fumigata).